Consider the following 574-residue polypeptide: Zinc finger and BTB domain-containing protein 3 (574 aa).

The BTB domain occupies 74–142 (CDCTVMVGST…MYAGQLTLRG (69 aa)). Disordered regions lie at residues 175-277 (AEAD…SSTE) and 305-346 (SLRV…APAP). Glycyl lysine isopeptide (Lys-Gly) (interchain with G-Cter in SUMO2) cross-links involve residues K181 and K182. A compositionally biased stretch (polar residues) spans 187-212 (NSQLPSLEFLSSTSRGTQPSLASAET). Low complexity predominate over residues 323 to 334 (PPASAPTSAPAP). Residue S362 is modified to Phosphoserine. Residues 364 to 403 (EETDVSDEQPQGPERAFPSGGAVYGAQPSQPEAFEDPGAA) are disordered. C2H2-type zinc fingers lie at residues 472 to 494 (PTCK…ATVH) and 500 to 523 (YECR…RKAH). Residues 526–535 (DLAKRSKPDP) show a composition bias toward basic and acidic residues. The interval 526 to 574 (DLAKRSKPDPEVGPLLGVQPLPGSPTADRQSSSGGGPPKDFVLAPKTNI) is disordered. K532 is covalently cross-linked (Glycyl lysine isopeptide (Lys-Gly) (interchain with G-Cter in SUMO2)). S549 carries the phosphoserine modification.

The protein resides in the nucleus. Its function is as follows. May be involved in transcriptional regulation. In Homo sapiens (Human), this protein is Zinc finger and BTB domain-containing protein 3 (ZBTB3).